The primary structure comprises 191 residues: Flavin prenyltransferase UbiX (191 aa).

FMN-binding positions include 13–15, Thr-39, 90–93, and Arg-125; these read GAS and TMKT. Dimethylallyl phosphate-binding residues include Tyr-155 and Lys-171.

This sequence belongs to the UbiX/PAD1 family.

It catalyses the reaction dimethylallyl phosphate + FMNH2 = prenylated FMNH2 + phosphate. Its function is as follows. Flavin prenyltransferase that catalyzes the synthesis of the prenylated FMN cofactor (prenyl-FMN) for 4-hydroxy-3-polyprenylbenzoic acid decarboxylase UbiD. The prenyltransferase is metal-independent and links a dimethylallyl moiety from dimethylallyl monophosphate (DMAP) to the flavin N5 and C6 atoms of FMN. The chain is Flavin prenyltransferase UbiX from Methanothermobacter thermautotrophicus (strain ATCC 29096 / DSM 1053 / JCM 10044 / NBRC 100330 / Delta H) (Methanobacterium thermoautotrophicum).